The following is a 721-amino-acid chain: Exocyst complex component 3-like protein 4 (721 aa).

Disordered stretches follow at residues 1–52 and 94–135; these read MPLP…SLGM and GLTA…QAES. Residues 22–37 show a composition bias toward polar residues; it reads SQTLPVTTWKSNSMKE. Serine 515 carries the post-translational modification Phosphoserine.

It belongs to the SEC6 family.

The polypeptide is Exocyst complex component 3-like protein 4 (Exoc3l4) (Mus musculus (Mouse)).